The following is a 74-amino-acid chain: Putative membrane protein insertion efficiency factor (74 aa).

The protein belongs to the UPF0161 family.

It localises to the cell inner membrane. Its function is as follows. Could be involved in insertion of integral membrane proteins into the membrane. The sequence is that of Putative membrane protein insertion efficiency factor from Syntrophus aciditrophicus (strain SB).